Here is a 618-residue protein sequence, read N- to C-terminus: Medium-chain acyl-CoA ligase ACSF2, mitochondrial (618 aa).

A mitochondrion-targeting transit peptide spans Met1–Phe44. Lys182 is subject to N6-acetyllysine. The residue at position 185 (Lys185) is an N6-acetyllysine; alternate. Lys185 is subject to N6-succinyllysine; alternate. Thr266 to Lys274 contributes to the ATP binding site. Lys343 and Lys401 each carry N6-acetyllysine. Position 481 is an N6-succinyllysine (Lys481). Residues Asp496 and Arg511 each coordinate ATP. The residue at position 513 (Lys513) is an N6-acetyllysine. An N6-acetyllysine; alternate mark is found at Lys547 and Lys573. N6-succinyllysine; alternate is present on residues Lys547 and Lys573. An ATP-binding site is contributed by Lys602. N6-succinyllysine is present on Lys602.

The protein belongs to the ATP-dependent AMP-binding enzyme family.

It is found in the mitochondrion. The catalysed reaction is a medium-chain fatty acid + ATP + CoA = a medium-chain fatty acyl-CoA + AMP + diphosphate. It catalyses the reaction octanoate + ATP + CoA = octanoyl-CoA + AMP + diphosphate. Acyl-CoA synthases catalyze the initial reaction in fatty acid metabolism, by forming a thioester with CoA. Has some preference toward medium-chain substrates. Plays a role in adipocyte differentiation. The chain is Medium-chain acyl-CoA ligase ACSF2, mitochondrial from Macaca fascicularis (Crab-eating macaque).